Here is a 265-residue protein sequence, read N- to C-terminus: Methyl-coenzyme M reductase II subunit gamma (265 aa).

Arg123 lines the coenzyme M pocket.

The protein belongs to the methyl-coenzyme M reductase gamma subunit family. MCR is a hexamer of two alpha, two beta, and two gamma chains, forming a dimer of heterotrimers. Requires coenzyme F430 as cofactor.

It carries out the reaction coenzyme B + methyl-coenzyme M = methane + coenzyme M-coenzyme B heterodisulfide. It functions in the pathway one-carbon metabolism; methyl-coenzyme M reduction; methane from methyl-coenzyme M: step 1/1. Component of the methyl-coenzyme M reductase (MCR) I that catalyzes the reductive cleavage of methyl-coenzyme M (CoM-S-CH3 or 2-(methylthio)ethanesulfonate) using coenzyme B (CoB or 7-mercaptoheptanoylthreonine phosphate) as reductant which results in the production of methane and the mixed heterodisulfide of CoB and CoM (CoM-S-S-CoB). This is the final step in methanogenesis. The polypeptide is Methyl-coenzyme M reductase II subunit gamma (mrtG) (Methanothermobacter thermautotrophicus (strain ATCC 29096 / DSM 1053 / JCM 10044 / NBRC 100330 / Delta H) (Methanobacterium thermoautotrophicum)).